We begin with the raw amino-acid sequence, 118 residues long: Small ribosomal subunit protein uS13 (118 aa).

The segment at 91 to 118 (HRRSLPVRGQRTKTNARTRKGPRKPIKA) is disordered.

It belongs to the universal ribosomal protein uS13 family. Part of the 30S ribosomal subunit. Forms a loose heterodimer with protein S19. Forms two bridges to the 50S subunit in the 70S ribosome.

Located at the top of the head of the 30S subunit, it contacts several helices of the 16S rRNA. In the 70S ribosome it contacts the 23S rRNA (bridge B1a) and protein L5 of the 50S subunit (bridge B1b), connecting the 2 subunits; these bridges are implicated in subunit movement. Contacts the tRNAs in the A and P-sites. The sequence is that of Small ribosomal subunit protein uS13 from Francisella tularensis subsp. tularensis (strain FSC 198).